We begin with the raw amino-acid sequence, 410 residues long: Argininosuccinate synthase (410 aa).

ATP is bound by residues 13-21 (AYSGGLDTS) and Ala40. L-citrulline is bound by residues Tyr91 and Ser96. Gly121 contributes to the ATP binding site. Residues Thr123, Asn127, and Asp128 each contribute to the L-aspartate site. Position 127 (Asn127) interacts with L-citrulline. L-citrulline contacts are provided by Arg131, Ser182, Ser191, Glu267, and Tyr279.

This sequence belongs to the argininosuccinate synthase family. Type 1 subfamily. Homotetramer.

It is found in the cytoplasm. The catalysed reaction is L-citrulline + L-aspartate + ATP = 2-(N(omega)-L-arginino)succinate + AMP + diphosphate + H(+). Its pathway is amino-acid biosynthesis; L-arginine biosynthesis; L-arginine from L-ornithine and carbamoyl phosphate: step 2/3. This is Argininosuccinate synthase from Gluconobacter oxydans (strain 621H) (Gluconobacter suboxydans).